The following is a 187-amino-acid chain: Small ribosomal subunit protein uS7 (187 aa).

The protein belongs to the universal ribosomal protein uS7 family. Part of the 30S ribosomal subunit.

In terms of biological role, one of the primary rRNA binding proteins, it binds directly to 16S rRNA where it nucleates assembly of the head domain of the 30S subunit. Is located at the subunit interface close to the decoding center. The chain is Small ribosomal subunit protein uS7 from Picrophilus torridus (strain ATCC 700027 / DSM 9790 / JCM 10055 / NBRC 100828 / KAW 2/3).